We begin with the raw amino-acid sequence, 495 residues long: Aspartyl/glutamyl-tRNA(Asn/Gln) amidotransferase subunit B (495 aa).

It belongs to the GatB/GatE family. GatB subfamily. As to quaternary structure, heterotrimer of A, B and C subunits.

The enzyme catalyses L-glutamyl-tRNA(Gln) + L-glutamine + ATP + H2O = L-glutaminyl-tRNA(Gln) + L-glutamate + ADP + phosphate + H(+). It catalyses the reaction L-aspartyl-tRNA(Asn) + L-glutamine + ATP + H2O = L-asparaginyl-tRNA(Asn) + L-glutamate + ADP + phosphate + 2 H(+). In terms of biological role, allows the formation of correctly charged Asn-tRNA(Asn) or Gln-tRNA(Gln) through the transamidation of misacylated Asp-tRNA(Asn) or Glu-tRNA(Gln) in organisms which lack either or both of asparaginyl-tRNA or glutaminyl-tRNA synthetases. The reaction takes place in the presence of glutamine and ATP through an activated phospho-Asp-tRNA(Asn) or phospho-Glu-tRNA(Gln). The protein is Aspartyl/glutamyl-tRNA(Asn/Gln) amidotransferase subunit B of Prochlorococcus marinus (strain MIT 9313).